Reading from the N-terminus, the 341-residue chain is Mitochondrial glutathione transporter SLC25A40 (341 aa).

Solcar repeat units follow at residues 14 to 132 (ITPS…LRDI), 140 to 224 (RAEI…VKQS), and 234 to 328 (PTFA…GKSF). A run of 6 helical transmembrane segments spans residues 20-40 (MIAS…LDVV), 104-124 (LWSG…IYFT), 143-163 (IASL…ISPL), 200-221 (WGPT…YELV), 236-256 (FAIS…VTLP), and 299-319 (GLFA…AIMI).

The protein belongs to the mitochondrial carrier (TC 2.A.29) family.

The protein resides in the mitochondrion inner membrane. It carries out the reaction glutathione(in) = glutathione(out). Probable mitochondrial transporter required for glutathione import into mitochondria. Glutathione, which plays key roles in oxidative metabolism, is produced exclusively in the cytosol and is imported in many organelles. Mitochondrial glutathione is required for the activity and stability of proteins containing iron-sulfur clusters. The protein is Mitochondrial glutathione transporter SLC25A40 of Xenopus tropicalis (Western clawed frog).